The primary structure comprises 898 residues: MASRVQKKDDDESDFLFENLDKGQVIQEKRAFNESPIHPRKCSLVISQFLYLLSRGDSFTKTEATDIFFAATKLFQSKDIPLRRLMYLLLKELSTISQDAIIVISSLTKDMSHKIELYRANAIRILCKITDSSILPQIERYFKQSIVEKDPHVSSAALVSSIHLLKVCPEIVKRWANEVQEAISNKSNMVQYHALALLHRIKQHDRLAVSKLVSNLIKNSLRSPYAQSYLIRCCVEVIEETNTEDRIFREYIESCLRSKNEMVAYEAARSICTFKNVSNKEINSAVGVLQNFLNSTKPTLRFAAVRTLNKLAQTNPTAVIPCNLDMENLITDTNRSIATLAITTLLKVGNESNVERLIKQIANFLGDINDEFKIVVVDAITSLSQKFPKKYKHLIIFLNKILRDEGTLQLKQATLDAILTVVNNIPESKEIALTELCDYIEDCDFPDLSVQILHLIGQEGPLTSSPAQYMRYIYNRVLLDGGIIRAAAVTSIAKFGLLYEPMKEKVVILLQRCLLDEDDEVRDRATLYLKLFKENDVRYLNKVLMDDVPVPLNNLQKSLELYLHQGDFSEPFDIASVSTVVETYQSPLLGDGKSPFSTGASKKGDSVTGTPKSNNASNNNNNNEESSGPESFATKLSQIPQFSTFGKLLKSSEYIELTETETEYVVNCVKHIYREHIVFQFNCTNTLNEQQLSNVSVKMVPSDPKLLKYECSIPIDVLPYGEPQQCYVAIRYIPANGYPLCSFSNALKFKVKEVDPSTGELDEPGYDDQYSLERLEIVPKDFLNRAFVGNFSEEWKKMSEDTQLVQTFSLVGVKSIDEAVKQIIKTLGMAPAEKSEVVTPKSAKHILYLTGKSLNNQLIYVRARMKLDQSQTNTDVELTIKSDDESLNDFVISAFIEK.

6 HEAT repeats span residues 62–99 (TEAT…ISQD), 170–207 (EIVK…HDRL), 280–317 (KEIN…TNPT), 319–352 (VIPC…GNES), 353–389 (NVER…KFPK), and 392–427 (KHLI…NIPE). The disordered stretch occupies residues 592-631 (GKSPFSTGASKKGDSVTGTPKSNNASNNNNNNEESSGPES). Positions 613 to 626 (SNNASNNNNNNEES) are enriched in low complexity.

The protein belongs to the COPG family. In terms of assembly, oligomeric complex that consists of at least the alpha, beta, beta', gamma, delta, epsilon and zeta subunits.

Its subcellular location is the cytoplasm. The protein resides in the golgi apparatus membrane. It is found in the cytoplasmic vesicle. The protein localises to the COPI-coated vesicle membrane. The coatomer is a cytosolic protein complex that binds to dilysine motifs and reversibly associates with Golgi non-clathrin-coated vesicles, which further mediate biosynthetic protein transport from the ER, via the Golgi up to the trans Golgi network. Coatomer complex is required for budding from Golgi membranes, and is essential for the retrograde Golgi-to-ER transport of dilysine-tagged proteins. The polypeptide is Coatomer subunit gamma (copG) (Dictyostelium discoideum (Social amoeba)).